Reading from the N-terminus, the 180-residue chain is Ribosome maturation factor RimM (180 aa).

The 74-residue stretch at 104 to 177 (PEEFHDHQLV…RVVVDPPGGL (74 aa)) folds into the PRC barrel domain.

Belongs to the RimM family. In terms of assembly, binds ribosomal protein uS19.

It is found in the cytoplasm. Its function is as follows. An accessory protein needed during the final step in the assembly of 30S ribosomal subunit, possibly for assembly of the head region. Essential for efficient processing of 16S rRNA. May be needed both before and after RbfA during the maturation of 16S rRNA. It has affinity for free ribosomal 30S subunits but not for 70S ribosomes. This Salinispora arenicola (strain CNS-205) protein is Ribosome maturation factor RimM.